A 492-amino-acid polypeptide reads, in one-letter code: Bifunctional purine biosynthesis protein PurH (492 aa).

The region spanning 1–144 is the MGS-like domain; it reads MKKAILSVSN…KNYKHVTTIV (144 aa).

It belongs to the PurH family.

The catalysed reaction is (6R)-10-formyltetrahydrofolate + 5-amino-1-(5-phospho-beta-D-ribosyl)imidazole-4-carboxamide = 5-formamido-1-(5-phospho-D-ribosyl)imidazole-4-carboxamide + (6S)-5,6,7,8-tetrahydrofolate. The enzyme catalyses IMP + H2O = 5-formamido-1-(5-phospho-D-ribosyl)imidazole-4-carboxamide. It functions in the pathway purine metabolism; IMP biosynthesis via de novo pathway; 5-formamido-1-(5-phospho-D-ribosyl)imidazole-4-carboxamide from 5-amino-1-(5-phospho-D-ribosyl)imidazole-4-carboxamide (10-formyl THF route): step 1/1. It participates in purine metabolism; IMP biosynthesis via de novo pathway; IMP from 5-formamido-1-(5-phospho-D-ribosyl)imidazole-4-carboxamide: step 1/1. The polypeptide is Bifunctional purine biosynthesis protein PurH (Staphylococcus aureus (strain Newman)).